Reading from the N-terminus, the 298-residue chain is MALLTPQGVKEVFQFQKPQGRQHLRRLLNWEEFDELRDARQSILLDTLYDSVIFAVGKGFPWVEVVQVVKFTEELLKETKGCSITEAVTILGKKLRDYQKQFNVTHLLALCDYSHNTFIRHYRLYQYVLSQDQEVNLTVAHEQICAPPQPLPLTDGTDRDVWRHEQQVAELSTAEVEKRANVLMLKETLRMEQAQMLQKAFGVEEAPGQLQPHPTLRKEALERLVSEAIHIQIACLQELLQYEIQAAFDILDLRLQKKTLSLSAPPPPLPCITTGPAALEDSPKASKANKGKKAKAKK.

Residues 264–298 are disordered; the sequence is APPPPLPCITTGPAALEDSPKASKANKGKKAKAKK. The span at 287-298 shows a compositional bias: basic residues; that stretch reads KANKGKKAKAKK.

This is an uncharacterized protein from Mus musculus (Mouse).